Consider the following 396-residue polypeptide: ATP phosphoribosyltransferase regulatory subunit (396 aa).

It belongs to the class-II aminoacyl-tRNA synthetase family. HisZ subfamily. In terms of assembly, heteromultimer composed of HisG and HisZ subunits.

Its subcellular location is the cytoplasm. It participates in amino-acid biosynthesis; L-histidine biosynthesis; L-histidine from 5-phospho-alpha-D-ribose 1-diphosphate: step 1/9. Functionally, required for the first step of histidine biosynthesis. May allow the feedback regulation of ATP phosphoribosyltransferase activity by histidine. The protein is ATP phosphoribosyltransferase regulatory subunit of Alkaliphilus metalliredigens (strain QYMF).